The following is a 525-amino-acid chain: Coronin-2A (525 aa).

5 WD repeats span residues 80–120, 130–170, 178–217, 220–263, and 269–308; these read GHRG…LTKN, GHAR…SVIM, CHQD…VLQE, YKGH…VPVT, and GSSG…PHLN. The stretch at 485–524 forms a coiled coil; it reads QMFYRQQDEIRRLRELVTQREVQAKQLELEIRNLRMNSPR.

The protein belongs to the WD repeat coronin family. Binds actin. Component of the N-Cor repressor complex, at least composed of NCOR1, NCOR2, HDAC3, TBL1X, TBL1R, CORO2A and GPS2.

This is Coronin-2A (CORO2A) from Bos taurus (Bovine).